Consider the following 337-residue polypeptide: Ral GTPase-activating protein subunit alpha-1 (337 aa).

In terms of assembly, component of the heterodimeric RalGAP1 complex with RALGAPB. Heterodimerization is required for activity. Interacts with the HLH region of TCF3/isoform E12.

It is found in the cytoplasm. Its subcellular location is the nucleus. Functionally, catalytic subunit of the heterodimeric RalGAP1 complex which acts as a GTPase activator for the Ras-like small GTPases RALA and RALB. The polypeptide is Ral GTPase-activating protein subunit alpha-1 (Sus scrofa (Pig)).